Consider the following 441-residue polypeptide: Protein translocase subunit SecY (441 aa).

10 consecutive transmembrane segments (helical) span residues 24–44 (LFVLGALIVYRIGSFIPVPGI), 77–97 (ILALGIMPYISASIVIQLLAT), 123–143 (ATVVFATIQAVAISTGLPNML), 152–172 (FSFYFTSVVSLVTGTMFLMWL), 181–201 (IGNGISILVFGGIVAGLPSAI), 215–235 (PLVLLLIAAIVFAVTYFVVFV), 272–292 (VMPAIFASSIILFPATLTQWF), 313–333 (PLYLLVYAVAIIFFSFFYTAM), 373–393 (LIGGLYVTFVCLVPYIMTSAW), and 397–417 (FYFGGTSLLIVVVVIMDFIVQ).

It belongs to the SecY/SEC61-alpha family. In terms of assembly, component of the Sec protein translocase complex. Heterotrimer consisting of SecY, SecE and SecG subunits. The heterotrimers can form oligomers, although 1 heterotrimer is thought to be able to translocate proteins. Interacts with the ribosome. Interacts with SecDF, and other proteins may be involved. Interacts with SecA.

It is found in the cell inner membrane. In terms of biological role, the central subunit of the protein translocation channel SecYEG. Consists of two halves formed by TMs 1-5 and 6-10. These two domains form a lateral gate at the front which open onto the bilayer between TMs 2 and 7, and are clamped together by SecE at the back. The channel is closed by both a pore ring composed of hydrophobic SecY resides and a short helix (helix 2A) on the extracellular side of the membrane which forms a plug. The plug probably moves laterally to allow the channel to open. The ring and the pore may move independently. The polypeptide is Protein translocase subunit SecY (Haemophilus influenzae (strain ATCC 51907 / DSM 11121 / KW20 / Rd)).